The sequence spans 221 residues: Phosphoribosylformylglycinamidine synthase subunit PurQ (221 aa).

Residues 8-221 (NVGIIRFPGT…GLKFFKSFLD (214 aa)) enclose the Glutamine amidotransferase type-1 domain. Residue Cys91 is the Nucleophile of the active site. Catalysis depends on residues His198 and Glu200.

As to quaternary structure, part of the FGAM synthase complex composed of 1 PurL, 1 PurQ and 2 PurS subunits.

It localises to the cytoplasm. The catalysed reaction is N(2)-formyl-N(1)-(5-phospho-beta-D-ribosyl)glycinamide + L-glutamine + ATP + H2O = 2-formamido-N(1)-(5-O-phospho-beta-D-ribosyl)acetamidine + L-glutamate + ADP + phosphate + H(+). The enzyme catalyses L-glutamine + H2O = L-glutamate + NH4(+). Its pathway is purine metabolism; IMP biosynthesis via de novo pathway; 5-amino-1-(5-phospho-D-ribosyl)imidazole from N(2)-formyl-N(1)-(5-phospho-D-ribosyl)glycinamide: step 1/2. In terms of biological role, part of the phosphoribosylformylglycinamidine synthase complex involved in the purines biosynthetic pathway. Catalyzes the ATP-dependent conversion of formylglycinamide ribonucleotide (FGAR) and glutamine to yield formylglycinamidine ribonucleotide (FGAM) and glutamate. The FGAM synthase complex is composed of three subunits. PurQ produces an ammonia molecule by converting glutamine to glutamate. PurL transfers the ammonia molecule to FGAR to form FGAM in an ATP-dependent manner. PurS interacts with PurQ and PurL and is thought to assist in the transfer of the ammonia molecule from PurQ to PurL. This chain is Phosphoribosylformylglycinamidine synthase subunit PurQ, found in Methanosphaera stadtmanae (strain ATCC 43021 / DSM 3091 / JCM 11832 / MCB-3).